The sequence spans 554 residues: Intraflagellar transport protein 56 (554 aa).

Positions 1-23 are disordered; the sequence is MMLSRAKPAVGNEVQQIDKKKKK. 4 TPR repeats span residues 57–90, 92–125, 151–184, and 468–501; these read EDTELWIGYCSFHLGDYKRSLEVFKALSQQEGCN, DVWVNLACTSFFLGMYKEADEAANKAPKSRLQNR, IEDQLSLASIHYMRSHYQEAIDIYKRILLENRDF, and ANDCYKMGHFYYAAKAFDILERLDPSPEYWEGKR.

This sequence belongs to the IFT56 family. Component of the IFT complex B.

The protein localises to the cell projection. Its subcellular location is the cilium. In terms of biological role, component of the intraflagellar transport (IFT) complex B required for transport of proteins in the motile cilium. Required for transport of specific ciliary cargo proteins related to motility, while it is neither required for IFT complex B assembly or motion nor for cilium assembly. Plays a key role in maintaining the integrity of the IFT complex B and the proper ciliary localization of the IFT complex B components. Essential for maintaining proper microtubule organization within the ciliary axoneme. The polypeptide is Intraflagellar transport protein 56 (Xenopus tropicalis (Western clawed frog)).